The sequence spans 951 residues: Metal transporter CNNM1 (951 aa).

The chain crosses the membrane as a helical span at residues 23 to 43 (AVLLLFFSLSPRPPAAAAWLL). A disordered region spans residues 116-135 (GGVAPSAVPTRPPGPQRCRE). The region spanning 218 to 414 (LLPPAWLRAL…DPYSDLVKEE (197 aa)) is the CNNM transmembrane domain. A run of 3 helical transmembrane segments spans residues 222 to 242 (AWLRALGALLLLALSALFSGL), 282 to 302 (LLCTLLLGQAGANAALAGWLY), and 321 to 341 (IHFPWLPALVCTGAVFLGAEI). CBS domains lie at 433–495 (LTPL…CTPL) and 502–568 (YNRP…ILDE). Composition is skewed to polar residues over residues 731 to 740 (SRCSGLNRSE) and 814 to 824 (KAPTTRGTPQT). Disordered stretches follow at residues 731-753 (SRCSGLNRSESPNRERSDFGGSN) and 795-830 (MDSSPQSPDMEAFTDGDSTKAPTTRGTPQTPKDDPA). Residues Thr-821 and Thr-824 each carry the phosphothreonine modification. Ser-850 carries the phosphoserine modification. The segment at 920–951 (KLLRTLSGQKRKRSPEGERTSEDNSNLTPLIT) is disordered. The span at 942 to 951 (DNSNLTPLIT) shows a compositional bias: polar residues.

This sequence belongs to the ACDP family. As to expression, restricted to brain and testis.

It localises to the cell membrane. Probable metal transporter. The protein is Metal transporter CNNM1 (CNNM1) of Homo sapiens (Human).